Reading from the N-terminus, the 279-residue chain is Methylthioribulose-1-phosphate dehydratase (279 aa).

C132 provides a ligand contact to substrate. Residues H150 and H152 each contribute to the Zn(2+) site. E175 functions as the Proton donor/acceptor in the catalytic mechanism. Residue H240 coordinates Zn(2+).

It belongs to the aldolase class II family. MtnB subfamily. Zn(2+) serves as cofactor.

Its subcellular location is the cytoplasm. It carries out the reaction 5-(methylsulfanyl)-D-ribulose 1-phosphate = 5-methylsulfanyl-2,3-dioxopentyl phosphate + H2O. The protein operates within amino-acid biosynthesis; L-methionine biosynthesis via salvage pathway; L-methionine from S-methyl-5-thio-alpha-D-ribose 1-phosphate: step 2/6. Its function is as follows. Catalyzes the dehydration of methylthioribulose-1-phosphate (MTRu-1-P) into 2,3-diketo-5-methylthiopentyl-1-phosphate (DK-MTP-1-P). The polypeptide is Methylthioribulose-1-phosphate dehydratase (Candida tropicalis (strain ATCC MYA-3404 / T1) (Yeast)).